Here is a 63-residue protein sequence, read N- to C-terminus: MPKMKTKTAAAKRVRLTATGKVMHAGSGMRHNLEHKSARKRRALKRDDVLQTAQAKKMKGLLG.

Residues Gly26 to Leu50 form a disordered region.

The protein belongs to the bacterial ribosomal protein bL35 family.

The chain is Large ribosomal subunit protein bL35 from Bifidobacterium animalis subsp. lactis (strain AD011).